The primary structure comprises 455 residues: Differentiation-associated protein 1 (455 aa).

The signal sequence occupies residues 1–21 (MKFKLFLLVFFVFLLPYLSQS). Residues 349-434 (IGSSSSSSSS…SDDDLGNPSS (86 aa)) are disordered. The span at 351–423 (SSSSSSSSSS…KSNHTSSESS (73 aa)) shows a compositional bias: low complexity. A lipid anchor (GPI-like-anchor amidated serine) is attached at Ser-433. Residues 434–455 (SSSILSVSKLIILLISIILYCF) constitute a propeptide, removed in mature form.

Its subcellular location is the cell membrane. In terms of biological role, plays a role in differentiation. The protein is Differentiation-associated protein 1 (dia1) of Dictyostelium discoideum (Social amoeba).